A 143-amino-acid chain; its full sequence is Nucleoside diphosphate kinase (143 aa).

ATP is bound by residues Lys-11, Phe-59, Arg-87, Thr-93, Arg-104, and Asn-114. Catalysis depends on His-117, which acts as the Pros-phosphohistidine intermediate.

The protein belongs to the NDK family. As to quaternary structure, homotetramer. It depends on Mg(2+) as a cofactor.

The protein resides in the cytoplasm. It carries out the reaction a 2'-deoxyribonucleoside 5'-diphosphate + ATP = a 2'-deoxyribonucleoside 5'-triphosphate + ADP. It catalyses the reaction a ribonucleoside 5'-diphosphate + ATP = a ribonucleoside 5'-triphosphate + ADP. In terms of biological role, major role in the synthesis of nucleoside triphosphates other than ATP. The ATP gamma phosphate is transferred to the NDP beta phosphate via a ping-pong mechanism, using a phosphorylated active-site intermediate. The polypeptide is Nucleoside diphosphate kinase (Thioalkalivibrio sulfidiphilus (strain HL-EbGR7)).